The sequence spans 201 residues: Small ribosomal subunit protein uS4c (201 aa).

A disordered region spans residues 20-43 (GLTNKRPKSRNDPTNQSSSRKISQ). Polar residues predominate over residues 31–41 (DPTNQSSSRKI). The S4 RNA-binding domain maps to 89-157 (MRLDNIIFRL…IGKNLDLSQK (69 aa)).

This sequence belongs to the universal ribosomal protein uS4 family. As to quaternary structure, part of the 30S ribosomal subunit. Contacts protein S5. The interaction surface between S4 and S5 is involved in control of translational fidelity.

It localises to the plastid. It is found in the chloroplast. Functionally, one of the primary rRNA binding proteins, it binds directly to 16S rRNA where it nucleates assembly of the body of the 30S subunit. Its function is as follows. With S5 and S12 plays an important role in translational accuracy. In Cycas taitungensis (Prince sago), this protein is Small ribosomal subunit protein uS4c (rps4).